We begin with the raw amino-acid sequence, 778 residues long: Subtilisin-like protease SBT5.4 (778 aa).

An N-terminal signal peptide occupies residues Met-1–Ala-35. The Inhibitor I9 domain occupies Ser-41 to His-126. Residues Ser-130–Ala-634 enclose the Peptidase S8 domain. The active-site Charge relay system is Asp-163. Asn-218 is a glycosylation site (N-linked (GlcNAc...) asparagine). His-230 (charge relay system) is an active-site residue. N-linked (GlcNAc...) asparagine glycans are attached at residues Asn-253 and Asn-404. The region spanning Ala-401 to Leu-486 is the PA domain. Ser-567 (charge relay system) is an active-site residue. N-linked (GlcNAc...) asparagine glycans are attached at residues Asn-657, Asn-690, and Asn-732.

This sequence belongs to the peptidase S8 family. Expressed in the vasculature of roots and leaves, stomata, sepals, stigma, anthers and siliques.

It is found in the endoplasmic reticulum. The protein resides in the cell membrane. Serine protease. Has a substrate preference for the hydrophobic residues Phe and Ala and the basic residue Asp in the P1 position, and for Asp, Leu or Ala in the P1' position. Interferes with CLAVATA 3 (CLV3) signaling, but does not cleave CLV3. This Arabidopsis thaliana (Mouse-ear cress) protein is Subtilisin-like protease SBT5.4.